Here is a 461-residue protein sequence, read N- to C-terminus: Putative long chain fatty acid-CoA ligase VraA (461 aa).

This sequence belongs to the ATP-dependent AMP-binding enzyme family.

This is Putative long chain fatty acid-CoA ligase VraA (vraA) from Staphylococcus haemolyticus (strain JCSC1435).